A 276-amino-acid polypeptide reads, in one-letter code: S-adenosylmethionine decarboxylase proenzyme (276 aa).

Residue S126 is the Schiff-base intermediate with substrate; via pyruvic acid of the active site. S126 carries the post-translational modification Pyruvic acid (Ser); by autocatalysis. H131 (proton acceptor; for processing activity) is an active-site residue. The active-site Proton donor; for catalytic activity is the C154.

Belongs to the prokaryotic AdoMetDC family. Type 2 subfamily. In terms of assembly, heterooctamer of four alpha and four beta chains arranged as a tetramer of alpha/beta heterodimers. It depends on pyruvate as a cofactor. In terms of processing, is synthesized initially as an inactive proenzyme. Formation of the active enzyme involves a self-maturation process in which the active site pyruvoyl group is generated from an internal serine residue via an autocatalytic post-translational modification. Two non-identical subunits are generated from the proenzyme in this reaction, and the pyruvate is formed at the N-terminus of the alpha chain, which is derived from the carboxyl end of the proenzyme. The post-translation cleavage follows an unusual pathway, termed non-hydrolytic serinolysis, in which the side chain hydroxyl group of the serine supplies its oxygen atom to form the C-terminus of the beta chain, while the remainder of the serine residue undergoes an oxidative deamination to produce ammonia and the pyruvoyl group blocking the N-terminus of the alpha chain.

It catalyses the reaction S-adenosyl-L-methionine + H(+) = S-adenosyl 3-(methylsulfanyl)propylamine + CO2. The protein operates within amine and polyamine biosynthesis; S-adenosylmethioninamine biosynthesis; S-adenosylmethioninamine from S-adenosyl-L-methionine: step 1/1. Functionally, catalyzes the decarboxylation of S-adenosylmethionine to S-adenosylmethioninamine (dcAdoMet), the propylamine donor required for the synthesis of the polyamines spermine and spermidine from the diamine putrescine. This chain is S-adenosylmethionine decarboxylase proenzyme, found in Alcanivorax borkumensis (strain ATCC 700651 / DSM 11573 / NCIMB 13689 / SK2).